Here is a 264-residue protein sequence, read N- to C-terminus: 3-methyl-2-oxobutanoate hydroxymethyltransferase (264 aa).

Residues D45 and D84 each coordinate Mg(2+). 3-methyl-2-oxobutanoate is bound by residues 45–46, D84, and K112; that span reads DS. Residue E114 participates in Mg(2+) binding. Catalysis depends on E181, which acts as the Proton acceptor.

It belongs to the PanB family. In terms of assembly, homodecamer; pentamer of dimers. The cofactor is Mg(2+).

The protein resides in the cytoplasm. It catalyses the reaction 3-methyl-2-oxobutanoate + (6R)-5,10-methylene-5,6,7,8-tetrahydrofolate + H2O = 2-dehydropantoate + (6S)-5,6,7,8-tetrahydrofolate. It participates in cofactor biosynthesis; (R)-pantothenate biosynthesis; (R)-pantoate from 3-methyl-2-oxobutanoate: step 1/2. Catalyzes the reversible reaction in which hydroxymethyl group from 5,10-methylenetetrahydrofolate is transferred onto alpha-ketoisovalerate to form ketopantoate. The sequence is that of 3-methyl-2-oxobutanoate hydroxymethyltransferase from Edwardsiella ictaluri (strain 93-146).